A 212-amino-acid polypeptide reads, in one-letter code: MQLFHLCLVISCSCPTVQASKLCLGWLWGMDIDPYKEFGATVELLSFLPSDFFPSVRDLLDTVSALYREALKSPEHCSPHHTALRQAILCWGELMTLATWVGNNLEDPASRDLVVNYVNTNMGLKIRQLWWFHISCLTFGRETVLEYLVSFGVWIRTPPAYRPPNAPILSTLPETTVVRRRGRSPRRRTPSPRRRRSQSPRRRRSQSRESQC.

Residues 1–19 form the signal peptide; it reads MQLFHLCLVISCSCPTVQA. Residues 25-27 are HBEAG; that stretch reads GWL. Residues 165–212 are disordered; it reads NAPILSTLPETTVVRRRGRSPRRRTPSPRRRRSQSPRRRRSQSRESQC. Over residues 178-205 the composition is skewed to basic residues; that stretch reads VRRRGRSPRRRTPSPRRRRSQSPRRRRS. The 1; half-length repeat unit spans residues 184–190; it reads SPRRRTP. Positions 184–206 are 3 X 8 AA repeats of S-P-R-R-R-R-S-Q; sequence SPRRRTPSPRRRRSQSPRRRRSQ. The propeptide occupies 184–212; it reads SPRRRTPSPRRRRSQSPRRRRSQSRESQC. 2 consecutive repeat copies span residues 191–198 and 199–206.

Belongs to the orthohepadnavirus precore antigen family. In terms of assembly, homodimerizes. In terms of processing, phosphorylated. Post-translationally, cleaved by host furin.

Its subcellular location is the secreted. It is found in the host nucleus. Functionally, may regulate immune response to the intracellular capsid in acting as a T-cell tolerogen, by having an immunoregulatory effect which prevents destruction of infected cells by cytotoxic T-cells. This immune regulation may predispose to chronicity during perinatal infections and prevent severe liver injury during adult infections. This Hepatitis B virus genotype B1 subtype adw (isolate Japan/pJDW233/1988) (HBV-B) protein is External core antigen.